We begin with the raw amino-acid sequence, 310 residues long: Olfactory receptor 5AR1 (310 aa).

Residues Met-1–Ile-25 are Extracellular-facing. A glycan (N-linked (GlcNAc...) asparagine) is linked at Asn-5. A helical membrane pass occupies residues Ile-26–Ile-46. Residues Ile-47–Gln-54 lie on the Cytoplasmic side of the membrane. Residues Leu-55–Ser-75 form a helical membrane-spanning segment. Over Ala-76–Thr-99 the chain is Extracellular. A disulfide bridge connects residues Cys-97 and Cys-189. Residues Gln-100 to Tyr-120 traverse the membrane as a helical segment. Residues Asp-121 to Ser-133 lie on the Cytoplasmic side of the membrane. A helical transmembrane segment spans residues Thr-134 to Val-154. Over Ser-155–Glu-196 the chain is Extracellular. Residues Ile-197–Ser-217 traverse the membrane as a helical segment. Cys-203 contacts Cu cation. Over Tyr-218 to Ala-237 the chain is Cytoplasmic. The chain crosses the membrane as a helical span at residues Phe-238–Met-258. Cu cation-binding residues include Met-256 and Arg-261. The Extracellular portion of the chain corresponds to Tyr-259 to Asp-271. A helical transmembrane segment spans residues Lys-272–Leu-292. Residues Arg-293–Gln-310 are Cytoplasmic-facing.

Belongs to the G-protein coupled receptor 1 family.

It localises to the cell membrane. Its activity is regulated as follows. Copper binding enhances receptor activity in response to odorant binding. In terms of biological role, olfactory receptor that is activated by the binding of organosulfur odorants with thioether groups such as (methylthio)methanethiol (MTMT). The activity of this receptor is mediated by G proteins which activate adenylyl cyclase. In Mus musculus (Mouse), this protein is Olfactory receptor 5AR1.